The chain runs to 287 residues: ATP synthase gamma chain (287 aa).

This sequence belongs to the ATPase gamma chain family. As to quaternary structure, F-type ATPases have 2 components, CF(1) - the catalytic core - and CF(0) - the membrane proton channel. CF(1) has five subunits: alpha(3), beta(3), gamma(1), delta(1), epsilon(1). CF(0) has three main subunits: a, b and c.

Its subcellular location is the cell membrane. Produces ATP from ADP in the presence of a proton gradient across the membrane. The gamma chain is believed to be important in regulating ATPase activity and the flow of protons through the CF(0) complex. This is ATP synthase gamma chain from Brevibacillus brevis (strain 47 / JCM 6285 / NBRC 100599).